A 216-amino-acid polypeptide reads, in one-letter code: Transmembrane protein 186 (216 aa).

Residues 1-68 (MAFLLRAVPR…IYRFNAIRAL (68 aa)) lie on the Mitochondrial matrix side of the membrane. Residues 69–91 (GFLSRLKLAQTAVTVVALPPGFY) traverse the membrane as a helical segment. Topologically, residues 92–103 (CYSQGLMTLSSL) are mitochondrial intermembrane. A helical membrane pass occupies residues 104-124 (GLMSGIASFALVMLCWMSHFF). The Mitochondrial matrix portion of the chain corresponds to 125–216 (RRLVGILYVN…GTLATLKNSK (92 aa)).

The protein belongs to the TMEM186 family. In terms of assembly, part of the mitochondrial complex I assembly/MCIA complex that comprises at least the core subunits TMEM126B, NDUFAF1, ECSIT and ACAD9 and complement subunits such as COA1 and TMEM186. Interacts with MT-ND3.

The protein resides in the mitochondrion inner membrane. Its function is as follows. As part of the MCIA complex, required for efficient assembly of the mitochondrial complex I. This chain is Transmembrane protein 186, found in Rattus norvegicus (Rat).